The sequence spans 226 residues: 2-C-methyl-D-erythritol 4-phosphate cytidylyltransferase (226 aa).

The protein belongs to the IspD/TarI cytidylyltransferase family. IspD subfamily.

It carries out the reaction 2-C-methyl-D-erythritol 4-phosphate + CTP + H(+) = 4-CDP-2-C-methyl-D-erythritol + diphosphate. It functions in the pathway isoprenoid biosynthesis; isopentenyl diphosphate biosynthesis via DXP pathway; isopentenyl diphosphate from 1-deoxy-D-xylulose 5-phosphate: step 2/6. In terms of biological role, catalyzes the formation of 4-diphosphocytidyl-2-C-methyl-D-erythritol from CTP and 2-C-methyl-D-erythritol 4-phosphate (MEP). This chain is 2-C-methyl-D-erythritol 4-phosphate cytidylyltransferase, found in Bacillus cereus (strain ATCC 10987 / NRS 248).